A 1171-amino-acid chain; its full sequence is DNA-directed RNA polymerase subunit beta (1171 aa).

The protein belongs to the RNA polymerase beta chain family. As to quaternary structure, the RNAP catalytic core consists of 2 alpha, 1 beta, 1 beta' and 1 omega subunit. When a sigma factor is associated with the core the holoenzyme is formed, which can initiate transcription.

It carries out the reaction RNA(n) + a ribonucleoside 5'-triphosphate = RNA(n+1) + diphosphate. Functionally, DNA-dependent RNA polymerase catalyzes the transcription of DNA into RNA using the four ribonucleoside triphosphates as substrates. The sequence is that of DNA-directed RNA polymerase subunit beta from Arthrobacter sp. (strain FB24).